The chain runs to 367 residues: Heme A synthase (367 aa).

A run of 5 helical transmembrane segments spans residues 25 to 45 (AIRI…LVGG), 111 to 131 (FLAR…VLTG), 137 to 157 (LWLP…IGWW), 174 to 194 (LATH…FMRA), and 211 to 231 (LAGL…LVAG). Heme is bound at residue His274. Transmembrane regions (helical) follow at residues 276–296 (LGAY…LRAA), 305–325 (SVVL…TLLL), and 327–347 (VPLH…GFAI). His335 is a binding site for heme.

It belongs to the COX15/CtaA family. Type 2 subfamily. In terms of assembly, interacts with CtaB. It depends on heme b as a cofactor.

Its subcellular location is the cell membrane. It catalyses the reaction Fe(II)-heme o + 2 A + H2O = Fe(II)-heme a + 2 AH2. Its pathway is porphyrin-containing compound metabolism; heme A biosynthesis; heme A from heme O: step 1/1. Its function is as follows. Catalyzes the conversion of heme O to heme A by two successive hydroxylations of the methyl group at C8. The first hydroxylation forms heme I, the second hydroxylation results in an unstable dihydroxymethyl group, which spontaneously dehydrates, resulting in the formyl group of heme A. The protein is Heme A synthase of Rhizobium rhizogenes (strain K84 / ATCC BAA-868) (Agrobacterium radiobacter).